We begin with the raw amino-acid sequence, 192 residues long: E3 ubiquitin-protein ligase RNF185 (192 aa).

A compositionally biased stretch (polar residues) spans 1–14; sequence MASKGPSASASTEN. The disordered stretch occupies residues 1-30; that stretch reads MASKGPSASASTENSSAGGPSGSSNGTGES. Residues 1–130 are Cytoplasmic-facing; sequence MASKGPSASA…GGFQGFGFGD (130 aa). Residues 15-27 are compositionally biased toward low complexity; the sequence is SSAGGPSGSSNGT. The required for ubiquitin ligase activity and protection against ER stress-induced cell death stretch occupies residues 29–80; sequence ESGGQDSTFECNICLDTAKDAVISLCGHLFCWPCLHQWLETRPNRQVCPVCK. The RING-type zinc-finger motif lies at 39–80; it reads CNICLDTAKDAVISLCGHLFCWPCLHQWLETRPNRQVCPVCK. Residues 90–123 are disordered; it reads PLYGRGSTGQQDPREKTPPRPQGQRPEPENRGGF. A helical transmembrane segment spans residues 131-151; it reads GGFQMSFGIGAFPFGIFATAF. Over 152 to 171 the chain is Mitochondrial intermembrane; sequence NINDGRPPPAVPGTPQYVDE. Residues 172 to 192 form a helical membrane-spanning segment; that stretch reads QFLSRLFLFVALVIMFWLLIA.

As to quaternary structure, interacts with ATG5 and BNIP1.

It localises to the mitochondrion outer membrane. The protein localises to the endoplasmic reticulum membrane. It catalyses the reaction S-ubiquitinyl-[E2 ubiquitin-conjugating enzyme]-L-cysteine + [acceptor protein]-L-lysine = [E2 ubiquitin-conjugating enzyme]-L-cysteine + N(6)-ubiquitinyl-[acceptor protein]-L-lysine.. It functions in the pathway protein modification; protein ubiquitination. Its function is as follows. E3 ubiquitin-protein ligase that regulates selective mitochondrial autophagy by mediating 'Lys-63'-linked polyubiquitination of BNIP1. Acts in the endoplasmic reticulum (ER)-associated degradation (ERAD) pathway, which targets misfolded proteins that accumulate in the endoplasmic reticulum (ER) for ubiquitination and subsequent proteasome-mediated degradation. Protects cells from ER stress-induced apoptosis. Responsible for the cotranslational ubiquitination and degradation of CFTR in the ERAD pathway. Also acts as a regulator of the innate antiviral response by catalyzing 'Lys-27'-linked polyubiquitination of CGAS, thereby promoting CGAS cyclic GMP-AMP synthase activity. Preferentially associates with the E2 enzymes UBE2J1 and UBE2J2. This chain is E3 ubiquitin-protein ligase RNF185 (Rnf185), found in Rattus norvegicus (Rat).